Here is a 218-residue protein sequence, read N- to C-terminus: Octanoyltransferase (218 aa).

The 187-residue stretch at 32 to 218 (GEAAEAIWLL…LRTFPQHFPD (187 aa)) folds into the BPL/LPL catalytic domain. Substrate-binding positions include 71–78 (RGGQYTYH), 151–153 (AIG), and 164–166 (GLS). The active-site Acyl-thioester intermediate is the Cys182.

The protein belongs to the LipB family.

It is found in the cytoplasm. It catalyses the reaction octanoyl-[ACP] + L-lysyl-[protein] = N(6)-octanoyl-L-lysyl-[protein] + holo-[ACP] + H(+). The protein operates within protein modification; protein lipoylation via endogenous pathway; protein N(6)-(lipoyl)lysine from octanoyl-[acyl-carrier-protein]: step 1/2. Its function is as follows. Catalyzes the transfer of endogenously produced octanoic acid from octanoyl-acyl-carrier-protein onto the lipoyl domains of lipoate-dependent enzymes. Lipoyl-ACP can also act as a substrate although octanoyl-ACP is likely to be the physiological substrate. This is Octanoyltransferase from Cereibacter sphaeroides (strain ATCC 17029 / ATH 2.4.9) (Rhodobacter sphaeroides).